The sequence spans 168 residues: Thiosulfate dehydrogenase [quinone] small subunit (168 aa).

The helical transmembrane segment at 6–26 (IIGIIFAILVVGWILATGQWA) threads the bilayer.

Heterodimer of a large and a small subunit in a 2:2 stoichiometry. TQO may associate with the terminal oxidase formed by doxBCE. Post-translationally, the N-terminus is blocked. In terms of processing, glycosylated.

It localises to the cell membrane. The catalysed reaction is 6-decylubiquinone + 2 thiosulfate = 6-decylubiquinol + tetrathionate. Inhibited by sulfite, metabisulfite and dithonite. In terms of biological role, TQO plays a role in sulfur oxidation and is proposed to couple sulfur oxidation to dioxygen reduction; caldariellaquinone or sulfolobus quinone seem to serve to transfer electrons to the electron transport chain terminal oxidase formed by DoxBCE. The sequence is that of Thiosulfate dehydrogenase [quinone] small subunit (doxA) from Acidianus ambivalens (Desulfurolobus ambivalens).